Consider the following 464-residue polypeptide: ATP synthase subunit beta (464 aa).

ATP is bound at residue 148-155; the sequence is GGAGVGKT.

This sequence belongs to the ATPase alpha/beta chains family. In terms of assembly, F-type ATPases have 2 components, CF(1) - the catalytic core - and CF(0) - the membrane proton channel. CF(1) has five subunits: alpha(3), beta(3), gamma(1), delta(1), epsilon(1). CF(0) has three main subunits: a(1), b(2) and c(9-12). The alpha and beta chains form an alternating ring which encloses part of the gamma chain. CF(1) is attached to CF(0) by a central stalk formed by the gamma and epsilon chains, while a peripheral stalk is formed by the delta and b chains.

Its subcellular location is the cell inner membrane. The catalysed reaction is ATP + H2O + 4 H(+)(in) = ADP + phosphate + 5 H(+)(out). Produces ATP from ADP in the presence of a proton gradient across the membrane. The catalytic sites are hosted primarily by the beta subunits. In Acinetobacter baylyi (strain ATCC 33305 / BD413 / ADP1), this protein is ATP synthase subunit beta.